Consider the following 424-residue polypeptide: Glucose-1-phosphate adenylyltransferase (424 aa).

Alpha-D-glucose 1-phosphate-binding positions include Tyr112, Gly177, 192 to 193 (EK), and Ser210.

It belongs to the bacterial/plant glucose-1-phosphate adenylyltransferase family. In terms of assembly, homotetramer.

It catalyses the reaction alpha-D-glucose 1-phosphate + ATP + H(+) = ADP-alpha-D-glucose + diphosphate. The protein operates within glycan biosynthesis; glycogen biosynthesis. In terms of biological role, involved in the biosynthesis of ADP-glucose, a building block required for the elongation reactions to produce glycogen. Catalyzes the reaction between ATP and alpha-D-glucose 1-phosphate (G1P) to produce pyrophosphate and ADP-Glc. The polypeptide is Glucose-1-phosphate adenylyltransferase (Methylococcus capsulatus (strain ATCC 33009 / NCIMB 11132 / Bath)).